Consider the following 696-residue polypeptide: Verrucotoxin subunit beta (696 aa).

The region spanning 506-696 (HMPGVETIKD…GCTTESQWSN (191 aa)) is the B30.2/SPRY domain.

The protein belongs to the SNTX/VTX toxin family. As to quaternary structure, tetramer composed of 2 alpha and 2 beta subunits. In terms of processing, glycosylated. In terms of tissue distribution, expressed by the venom gland.

The protein localises to the secreted. This lethal (towards mice) toxin induces hemolytic, cytolytic and hypotensive activities. Inhibits calcium channels and may activate ATP-sensitive potassium channels in frog atrial heart muscle. In guinea-pig ventricular myocytes, it modulates calcium channel activity through the beta-adrenoceptor-cAMP-PKA pathway (ADRB). This Synanceia verrucosa (Reef stonefish) protein is Verrucotoxin subunit beta.